Here is a 328-residue protein sequence, read N- to C-terminus: 6-phosphogluconolactonase (328 aa).

It belongs to the cycloisomerase 2 family.

The enzyme catalyses 6-phospho-D-glucono-1,5-lactone + H2O = 6-phospho-D-gluconate + H(+). The protein operates within carbohydrate degradation; pentose phosphate pathway; D-ribulose 5-phosphate from D-glucose 6-phosphate (oxidative stage): step 2/3. Its function is as follows. Catalyzes the hydrolysis of 6-phosphogluconolactone to 6-phosphogluconate. This is 6-phosphogluconolactonase from Photorhabdus laumondii subsp. laumondii (strain DSM 15139 / CIP 105565 / TT01) (Photorhabdus luminescens subsp. laumondii).